Reading from the N-terminus, the 208-residue chain is Large ribosomal subunit protein uL3 (208 aa).

The segment at 116–148 is disordered; that stretch reads GFQGVIKRHGQSRGPMAHGSRYHRRPGSMGPVA.

This sequence belongs to the universal ribosomal protein uL3 family. As to quaternary structure, part of the 50S ribosomal subunit. Forms a cluster with proteins L14 and L19.

Functionally, one of the primary rRNA binding proteins, it binds directly near the 3'-end of the 23S rRNA, where it nucleates assembly of the 50S subunit. This Streptococcus pneumoniae (strain Hungary19A-6) protein is Large ribosomal subunit protein uL3.